Reading from the N-terminus, the 346-residue chain is uncharacterized protein (346 aa).

Residues 16-36 (ILGIIICIILIVGFFISFDST) form a helical membrane-spanning segment.

Its subcellular location is the membrane. This is an uncharacterized protein from Methanocaldococcus jannaschii (strain ATCC 43067 / DSM 2661 / JAL-1 / JCM 10045 / NBRC 100440) (Methanococcus jannaschii).